Consider the following 648-residue polypeptide: MSESKVYPVKAHISNGALLDKAGYEAMYRASVQDPDAFWGEQGKILDWMKPYTRVKNTSYDPGHVSIKWYEDGLLNVSANCLDRHLAQRGDKVAIIWEGDNPAEDRKLTYRELHTEVCKFANVLKAQGVHRGDVVCLYMPMVPEAAIAMLACTRIGAVHSIVFGGFSPEALAGRIIDSGSSIVITADEGLRGGRPVPLKKNVDEALTNPETKVNNVIVLKRTGGNIAWHNHRDIWWHDAVATVSADCPPEAMGAEDPLFILYTSGSTGKPKGVLHTTGGYLVYATLTFKYIFDYHEEDIYWCTADVGWVTGHSYLVYGPLANGATTIMFEGVPNYPATNRMSQVVDKHQVSILYTAPTAIRALMAKGNEAVADTSRSSLRIMGSVGEPINPEAWEWYYRTIGEERCPIVDTWWQTETGGILISPLPGVTDLKPGSATRPFFGVQPALVDNMGEPLEGATEGNLVITDSWPGQMRTVFGDHERFEQTYFSTFPGRYFTGDGARRDEDGYYWITGRVDDVLNVSGHRMGTAEIESALVSHPKIAEAAVVGVPHEIKGQGIYAYVTLIAGEEPSRELHKEVKEWVRKEIGAIATPDVIHWAEGLPKTRSGKIMRRILRKIATGETDSLGDISTLADPGVVDKLIREKSEAA.

CoA-binding positions include 191–194, T310, and N334; that span reads RGGR. ATP-binding positions include 386–388, 410–415, D499, and R514; these read GEP and DTWWQT. Residue S522 coordinates CoA. An ATP-binding site is contributed by R525. The Mg(2+) site is built by V536, H538, and I541. Residue R583 coordinates CoA. At K608 the chain carries N6-acetyllysine.

This sequence belongs to the ATP-dependent AMP-binding enzyme family. The cofactor is Mg(2+). In terms of processing, acetylated. Deacetylation by the SIR2-homolog deacetylase activates the enzyme.

It catalyses the reaction acetate + ATP + CoA = acetyl-CoA + AMP + diphosphate. Functionally, catalyzes the conversion of acetate into acetyl-CoA (AcCoA), an essential intermediate at the junction of anabolic and catabolic pathways. AcsA undergoes a two-step reaction. In the first half reaction, AcsA combines acetate with ATP to form acetyl-adenylate (AcAMP) intermediate. In the second half reaction, it can then transfer the acetyl group from AcAMP to the sulfhydryl group of CoA, forming the product AcCoA. The sequence is that of Acetyl-coenzyme A synthetase from Aeromonas hydrophila subsp. hydrophila (strain ATCC 7966 / DSM 30187 / BCRC 13018 / CCUG 14551 / JCM 1027 / KCTC 2358 / NCIMB 9240 / NCTC 8049).